The chain runs to 171 residues: Ribosome maturation factor RimM (171 aa).

One can recognise a PRC barrel domain in the interval Glu98 to Leu170.

This sequence belongs to the RimM family. Binds ribosomal protein uS19.

It is found in the cytoplasm. Its function is as follows. An accessory protein needed during the final step in the assembly of 30S ribosomal subunit, possibly for assembly of the head region. Essential for efficient processing of 16S rRNA. May be needed both before and after RbfA during the maturation of 16S rRNA. It has affinity for free ribosomal 30S subunits but not for 70S ribosomes. This chain is Ribosome maturation factor RimM, found in Pediococcus pentosaceus (strain ATCC 25745 / CCUG 21536 / LMG 10740 / 183-1w).